Reading from the N-terminus, the 109-residue chain is Cytochrome c oxidase subunit 6A1, mitochondrial (109 aa).

Residues 1 to 24 (MAAAAGSRVFGLLGRSRLQLSRCM) constitute a mitochondrion transit peptide. Over 25–34 (SSGAHGEEGS) the chain is Mitochondrial matrix. Residues 35–59 (ARMWKALTYFVALPGVGVSMLNVFL) form a helical membrane-spanning segment. The Mitochondrial intermembrane segment spans residues 60–109 (KSHHGEEERPEFVAYPHLRIRSKPFPWGDGNHTLFHNPHVNPLPTGYEDE).

Belongs to the cytochrome c oxidase subunit 6A family. As to quaternary structure, component of the cytochrome c oxidase (complex IV, CIV), a multisubunit enzyme composed of 14 subunits. The complex is composed of a catalytic core of 3 subunits MT-CO1, MT-CO2 and MT-CO3, encoded in the mitochondrial DNA, and 11 supernumerary subunits COX4I1 (or COX4I2), COX5A, COX5B, COX6A2 (or COX6A1), COX6B1 (or COX6B2), COX6C, COX7A1 (or COX7A2), COX7B, COX7C, COX8B and NDUFA4, which are encoded in the nuclear genome. The complex exists as a monomer or a dimer and forms supercomplexes (SCs) in the inner mitochondrial membrane with NADH-ubiquinone oxidoreductase (complex I, CI) and ubiquinol-cytochrome c oxidoreductase (cytochrome b-c1 complex, complex III, CIII), resulting in different assemblies (supercomplex SCI(1)III(2)IV(1) and megacomplex MCI(2)III(2)IV(2)).

Its subcellular location is the mitochondrion inner membrane. It participates in energy metabolism; oxidative phosphorylation. Component of the cytochrome c oxidase, the last enzyme in the mitochondrial electron transport chain which drives oxidative phosphorylation. The respiratory chain contains 3 multisubunit complexes succinate dehydrogenase (complex II, CII), ubiquinol-cytochrome c oxidoreductase (cytochrome b-c1 complex, complex III, CIII) and cytochrome c oxidase (complex IV, CIV), that cooperate to transfer electrons derived from NADH and succinate to molecular oxygen, creating an electrochemical gradient over the inner membrane that drives transmembrane transport and the ATP synthase. Cytochrome c oxidase is the component of the respiratory chain that catalyzes the reduction of oxygen to water. Electrons originating from reduced cytochrome c in the intermembrane space (IMS) are transferred via the dinuclear copper A center (CU(A)) of subunit 2 and heme A of subunit 1 to the active site in subunit 1, a binuclear center (BNC) formed by heme A3 and copper B (CU(B)). The BNC reduces molecular oxygen to 2 water molecules unsing 4 electrons from cytochrome c in the IMS and 4 protons from the mitochondrial matrix. This is Cytochrome c oxidase subunit 6A1, mitochondrial (COX6A1) from Bos taurus (Bovine).